The following is a 143-amino-acid chain: Large ribosomal subunit protein uL16 (143 aa).

Belongs to the universal ribosomal protein uL16 family. As to quaternary structure, part of the 50S ribosomal subunit.

Functionally, binds 23S rRNA and is also seen to make contacts with the A and possibly P site tRNAs. This Caulobacter vibrioides (strain ATCC 19089 / CIP 103742 / CB 15) (Caulobacter crescentus) protein is Large ribosomal subunit protein uL16.